We begin with the raw amino-acid sequence, 94 residues long: Neutrophil antibiotic peptide NP-2 (94 aa).

The first 19 residues, 1-19 (MRTLTLLTALLLLALHTQA), serve as a signal peptide directing secretion. A propeptide spanning residues 20–62 (KSPQGTAEEAPDQEQLVMEDQDISISFGGDKGTALQDADVKAG) is cleaved from the precursor. 3 disulfide bridges follow: Cys65-Cys93, Cys67-Cys82, and Cys72-Cys92.

Belongs to the alpha-defensin family. As to expression, highest expression in bone marrow and to a much lesser extent in small intestine.

Its subcellular location is the secreted. Active in vitro against S.aureus, fungi, Gram-positive and Gram-negative bacteria and to a lesser extent against an enveloped virus. The sequence is that of Neutrophil antibiotic peptide NP-2 (Defa) from Rattus norvegicus (Rat).